The primary structure comprises 86 residues: MeuNaTxbeta-1 (86 aa).

An N-terminal signal peptide occupies residues 1 to 20; it reads MMKIIIFLIVSSLVLIGVKT. The 63-residue stretch at 21-83 folds into the LCN-type CS-alpha/beta domain; the sequence is DNGYLLDKYT…LWHYETNKCN (63 aa). 4 disulfides stabilise this stretch: Cys-32/Cys-82, Cys-36/Cys-57, Cys-43/Cys-64, and Cys-47/Cys-66.

As to expression, expressed by the venom gland.

The protein localises to the secreted. Inhibits sodium channels (Nav). Also moderately inhibits human calcium-activated potassium channel KCa1.1/KCNMA1/BK (41.9% decrease at 2 uM toxin concentration). Shows moderate antimicrobial activity against both Gram-positive and -negative bacteria. This is MeuNaTxbeta-1 from Mesobuthus eupeus (Lesser Asian scorpion).